Here is a 544-residue protein sequence, read N- to C-terminus: CTP synthase (544 aa).

The interval Met-1–Leu-266 is amidoligase domain. Position 12 (Ser-12) interacts with CTP. Ser-12 is a binding site for UTP. Ser-13–Val-18 contacts ATP. Tyr-53 contacts L-glutamine. Asp-70 is an ATP binding site. Positions 70 and 140 each coordinate Mg(2+). Residues Asp-147 to Glu-149, Lys-187 to Gln-192, and Lys-223 each bind CTP. UTP contacts are provided by residues Lys-187–Gln-192 and Lys-223. The region spanning Thr-291–Gln-544 is the Glutamine amidotransferase type-1 domain. Gly-356 is an L-glutamine binding site. The Nucleophile; for glutamine hydrolysis role is filled by Cys-383. L-glutamine contacts are provided by residues Leu-384–Gln-387, Glu-407, and Arg-467. Catalysis depends on residues His-517 and Glu-519.

The protein belongs to the CTP synthase family. As to quaternary structure, homotetramer.

The enzyme catalyses UTP + L-glutamine + ATP + H2O = CTP + L-glutamate + ADP + phosphate + 2 H(+). It carries out the reaction L-glutamine + H2O = L-glutamate + NH4(+). The catalysed reaction is UTP + NH4(+) + ATP = CTP + ADP + phosphate + 2 H(+). Its pathway is pyrimidine metabolism; CTP biosynthesis via de novo pathway; CTP from UDP: step 2/2. With respect to regulation, allosterically activated by GTP, when glutamine is the substrate; GTP has no effect on the reaction when ammonia is the substrate. The allosteric effector GTP functions by stabilizing the protein conformation that binds the tetrahedral intermediate(s) formed during glutamine hydrolysis. Inhibited by the product CTP, via allosteric rather than competitive inhibition. In terms of biological role, catalyzes the ATP-dependent amination of UTP to CTP with either L-glutamine or ammonia as the source of nitrogen. Regulates intracellular CTP levels through interactions with the four ribonucleotide triphosphates. This is CTP synthase from Deinococcus radiodurans (strain ATCC 13939 / DSM 20539 / JCM 16871 / CCUG 27074 / LMG 4051 / NBRC 15346 / NCIMB 9279 / VKM B-1422 / R1).